A 414-amino-acid chain; its full sequence is Ceramide synthase 5 (414 aa).

Residues M1–R43 lie on the Lumenal side of the membrane. Residue N26 is glycosylated (N-linked (GlcNAc...) asparagine). A helical membrane pass occupies residues A44–F64. The interval R75–P136 is homeobox-like. The TLC domain occupies T139–S340. Helical transmembrane passes span F148 to F168, L187 to I207, F214 to N234, and L272 to I292. The Last loop motif motif lies at E299–S309. The chain crosses the membrane as a helical span at residues L312 to V332. Residues Q333–D414 are Cytoplasmic-facing. A disordered region spans residues D347–S373.

Interacts with PAQR4; the interaction regulates the stability and activity of CERS5 and is inhibited in presence of ceramides. Post-translationally, phosphorylated at the C-terminus by CK2. In terms of tissue distribution, ubiquitously expressed, with highest levels in testis and kidney. Expressed in pulmonary epithelia.

Its subcellular location is the endoplasmic reticulum membrane. The enzyme catalyses a sphingoid base + hexadecanoyl-CoA = an N-hexadecanoyl-sphingoid base + CoA + H(+). The catalysed reaction is sphinganine + hexadecanoyl-CoA = N-hexadecanoylsphinganine + CoA + H(+). It carries out the reaction hexadecasphinganine + hexadecanoyl-CoA = N-hexadecanoylhexadecasphinganine + CoA + H(+). It catalyses the reaction sphing-4-enine + hexadecanoyl-CoA = N-hexadecanoylsphing-4-enine + CoA + H(+). The enzyme catalyses 2-hydroxyhexadecanoyl-CoA + sphinganine = N-(2-hydroxyhexadecanoyl)-sphinganine + CoA + H(+). The catalysed reaction is sphinganine + tetradecanoyl-CoA = N-(tetradecanoyl)-sphinganine + CoA + H(+). It carries out the reaction sphinganine + octadecanoyl-CoA = N-(octadecanoyl)-sphinganine + CoA + H(+). It catalyses the reaction sphinganine + (9Z)-octadecenoyl-CoA = N-(9Z-octadecenoyl)-sphinganine + CoA + H(+). The enzyme catalyses a fatty acyl-CoA + sphing-4-enine = an N-acylsphing-4-enine + CoA + H(+). The catalysed reaction is tetracosenoyl-CoA + sphing-4-enine = N-(tetracosenoyl)-sphing-4-enine + CoA + H(+). The protein operates within lipid metabolism; sphingolipid metabolism. Its activity is regulated as follows. Inhibited by fumonisin B1. Ceramide synthase that catalyzes the transfer of the acyl chain from acyl-CoA to a sphingoid base, with high selectivity toward palmitoyl-CoA (hexadecanoyl-CoA; C16:0-CoA). Can use other acyl donors, but with less efficiency. N-acylates sphinganine and sphingosine bases to form dihydroceramides and ceramides in de novo synthesis and salvage pathways, respectively. Plays a role in de novo ceramide synthesis and surfactant homeostasis in pulmonary epithelia. The protein is Ceramide synthase 5 of Mus musculus (Mouse).